Reading from the N-terminus, the 157-residue chain is Arginine regulator (157 aa).

The protein belongs to the ArgR family.

The protein resides in the cytoplasm. The protein operates within amino-acid degradation; L-arginine degradation via ADI pathway. In terms of biological role, regulates the transcription of the arc operon, involved in arginine catabolism. The sequence is that of Arginine regulator (argR1) from Streptococcus pyogenes serotype M3 (strain ATCC BAA-595 / MGAS315).